The sequence spans 632 residues: 1-deoxy-D-xylulose-5-phosphate synthase (632 aa).

Residues histidine 79 and 120–122 each bind thiamine diphosphate; that span reads GHA. Residue aspartate 151 participates in Mg(2+) binding. Thiamine diphosphate contacts are provided by residues 152–153, asparagine 180, phenylalanine 292, and glutamate 376; that span reads GS. Asparagine 180 is a Mg(2+) binding site.

This sequence belongs to the transketolase family. DXPS subfamily. In terms of assembly, homodimer. Requires Mg(2+) as cofactor. It depends on thiamine diphosphate as a cofactor.

It carries out the reaction D-glyceraldehyde 3-phosphate + pyruvate + H(+) = 1-deoxy-D-xylulose 5-phosphate + CO2. It participates in metabolic intermediate biosynthesis; 1-deoxy-D-xylulose 5-phosphate biosynthesis; 1-deoxy-D-xylulose 5-phosphate from D-glyceraldehyde 3-phosphate and pyruvate: step 1/1. Its function is as follows. Catalyzes the acyloin condensation reaction between C atoms 2 and 3 of pyruvate and glyceraldehyde 3-phosphate to yield 1-deoxy-D-xylulose-5-phosphate (DXP). The protein is 1-deoxy-D-xylulose-5-phosphate synthase of Azobacteroides pseudotrichonymphae genomovar. CFP2.